A 476-amino-acid chain; its full sequence is Ribulose bisphosphate carboxylase large chain (476 aa).

The propeptide occupies 1–2 (MS). P3 carries the post-translational modification N-acetylproline. Residue K14 is modified to N6,N6,N6-trimethyllysine. Residues N123 and T173 each contribute to the substrate site. The Proton acceptor role is filled by K175. K177 provides a ligand contact to substrate. The Mg(2+) site is built by K201, D203, and E204. K201 bears the N6-carboxylysine mark. H294 (proton acceptor) is an active-site residue. Substrate is bound by residues R295, H327, and S379.

Belongs to the RuBisCO large chain family. Type I subfamily. Heterohexadecamer of 8 large chains and 8 small chains; disulfide-linked. The disulfide link is formed within the large subunit homodimers. It depends on Mg(2+) as a cofactor. In terms of processing, the disulfide bond which can form in the large chain dimeric partners within the hexadecamer appears to be associated with oxidative stress and protein turnover.

It localises to the plastid. It is found in the chloroplast. The enzyme catalyses 2 (2R)-3-phosphoglycerate + 2 H(+) = D-ribulose 1,5-bisphosphate + CO2 + H2O. It carries out the reaction D-ribulose 1,5-bisphosphate + O2 = 2-phosphoglycolate + (2R)-3-phosphoglycerate + 2 H(+). In terms of biological role, ruBisCO catalyzes two reactions: the carboxylation of D-ribulose 1,5-bisphosphate, the primary event in carbon dioxide fixation, as well as the oxidative fragmentation of the pentose substrate in the photorespiration process. Both reactions occur simultaneously and in competition at the same active site. The protein is Ribulose bisphosphate carboxylase large chain of Setaria italica (Foxtail millet).